Reading from the N-terminus, the 472-residue chain is FAD-dependent monooxygenase ltmM (472 aa).

A helical membrane pass occupies residues 7 to 27; sequence VIIVGGSVAGLSLAHCLEKIG. Residues Glu34, Gly48, and Arg107 each contribute to the FAD site. An N-linked (GlcNAc...) asparagine glycan is attached at Asn186. Positions 306 and 319 each coordinate FAD. The chain crosses the membrane as a helical span at residues 450–470; that stretch reads IVYALYLVAAAAFILYCLSSL.

This sequence belongs to the paxM FAD-dependent monooxygenase family. The cofactor is FAD.

The protein localises to the membrane. It participates in secondary metabolite biosynthesis. In terms of biological role, FAD-dependent monooxygenase; part of the gene cluster that mediates the biosynthesis of lolitrems, indole-diterpene mycotoxins that are potent tremorgens in mammals, and are synthesized by clavicipitaceous fungal endophytes in association with their grass hosts. The geranylgeranyl diphosphate (GGPP) synthase ltmG is proposed to catalyze the first step in lolitremB biosynthesis. LtmG catalyzes a series of iterative condensations of isopentenyl diphosphate (IPP) with dimethylallyl diphosphate (DMAPP), geranyl diphosphate (GPP), and farnesyl diphosphate (FPP), to form GGPP. GGPP then condenses with indole-3-glycerol phosphate to form 3-geranylgeranylindole, an acyclic intermediate, to be incorporated into paxilline. Either ltmG or ltmC could be responsible for this step, as both are putative prenyl transferases. The FAD-dependent monooxygenase ltmM then catalyzes the epoxidation of the two terminal alkenes of the geranylgeranyl moiety, which is subsequently cyclized by ltmB, to paspaline. The cytochrome P450 monooxygenases ltmQ and ltmP can sequentially oxidize paspaline to terpendole E and terpendole F. Alternatively, ltmP converts paspaline to an intermediate which is oxidized by ltmQ to terpendole F. LtmF, ltmK, ltmE and ltmJ appear to be unique to the epichloe endophytes. The prenyltransferase ltmF is involved in the 27-hydroxyl-O-prenylation. The cytochrome P450 monooxygenase ltmK is required for the oxidative acetal ring formation. The multi-functional prenyltransferase ltmE is required for C20- and C21-prenylations of the indole ring of paspalanes and acts together with the cytochrome P450 monooxygenase ltmJ to yield lolitremanes by multiple oxidations and ring closures. The stereoisomer pairs of lolitriol and lolitrem N or lolitrem B and lolitrem F may be attributed to variations in the way in which ring closure can occur under the action of ltmJ. While the major product of this pathway is lolitrem B, the prenyl transferases and cytochrome P450 monooxygenases identified in this pathway have a remarkable versatility in their regio- and stereo-specificities to generate a diverse range of metabolites that are products of a metabolic grid rather than a linear pathway. The sequence is that of FAD-dependent monooxygenase ltmM (ltmM) from Epichloe festucae var. lolii (Neotyphodium lolii).